Reading from the N-terminus, the 264-residue chain is MKKLAAGISYQGNNYCGWQSQKNIISIQEYVELALFKFSGEKIKIYCAGRTDAKVHALLQVVHFYTDIKRSYRQWILGVNSYLPYDISIMWVIKVHNNFHARYSAIAKKYLYLIHNNISRSGIFRKYCFNVFISLNINDMKKAAQKLIGKHDFSSFKGSECQSKTTYRVIYYIRINKYKEYIFVEIKANSFLNHMMRNIIGNLIEIGKGKKSKEWMSELLFLKNNKFSIFSADPKGLYLSNVYYPFYFNIPKFNFKLKNFLKIF.

Residue aspartate 52 is the Nucleophile of the active site. Tyrosine 110 is a binding site for substrate.

It belongs to the tRNA pseudouridine synthase TruA family. In terms of assembly, homodimer.

It carries out the reaction uridine(38/39/40) in tRNA = pseudouridine(38/39/40) in tRNA. Functionally, formation of pseudouridine at positions 38, 39 and 40 in the anticodon stem and loop of transfer RNAs. The chain is tRNA pseudouridine synthase A from Wigglesworthia glossinidia brevipalpis.